Consider the following 92-residue polypeptide: MKTIIWPTYINSEHSRGEGRKLSLEESVEEPKIREISQSLKKLKIQYVVEHNKSYPGSWWEKSGRVVVEQEDMTKLELLRAIAKNIKNSRNN.

It belongs to the SRP19 family. Part of the signal recognition particle protein translocation system, which is composed of SRP and FtsY. Archaeal SRP consists of a 7S RNA molecule of 300 nucleotides and two protein subunits: SRP54 and SRP19.

Its subcellular location is the cytoplasm. Functionally, involved in targeting and insertion of nascent membrane proteins into the cytoplasmic membrane. Binds directly to 7S RNA and mediates binding of the 54 kDa subunit of the SRP. In Methanosphaera stadtmanae (strain ATCC 43021 / DSM 3091 / JCM 11832 / MCB-3), this protein is Signal recognition particle 19 kDa protein.